A 551-amino-acid polypeptide reads, in one-letter code: Glucose-6-phosphate isomerase (551 aa).

E349 functions as the Proton donor in the catalytic mechanism. Active-site residues include H378 and K480.

The protein belongs to the GPI family.

Its subcellular location is the cytoplasm. It carries out the reaction alpha-D-glucose 6-phosphate = beta-D-fructose 6-phosphate. It functions in the pathway carbohydrate biosynthesis; gluconeogenesis. It participates in carbohydrate degradation; glycolysis; D-glyceraldehyde 3-phosphate and glycerone phosphate from D-glucose: step 2/4. Its function is as follows. Catalyzes the reversible isomerization of glucose-6-phosphate to fructose-6-phosphate. In Parasynechococcus marenigrum (strain WH8102), this protein is Glucose-6-phosphate isomerase.